The following is a 425-amino-acid chain: UDP-sugar transporter protein SLC35A5 (425 aa).

Topologically, residues 1 to 7 (MESNCGH) are cytoplasmic. The helical transmembrane segment at 8-28 (PMLSVSSAMYTFLLGAIFITL) threads the bilayer. Over 29 to 52 (SSSRILLVKYSANEENKYDYLPTT) the chain is Lumenal. A helical transmembrane segment spans residues 53–73 (VNVCSELVKLVFCALVSFWVL). The Cytoplasmic segment spans residues 74–92 (KKEDHQNRKLRCGSWKEFF). The chain crosses the membrane as a helical span at residues 93 to 115 (NFMKWSIPAFLYFLDNLIVFYVL). Topologically, residues 116 to 119 (SYLQ) are lumenal. Residues 120-142 (PAMAVIFSNFSIITTALLFRIVL) form a helical membrane-spanning segment. Topologically, residues 143–147 (KRHLN) are cytoplasmic. The chain crosses the membrane as a helical span at residues 148-168 (GIQWASLLILFLSIVALTSGT). Topologically, residues 169–228 (ETSQHSLAGHGFHHDALFSPSNSCLLFRSECPRKDNCTAKEWTFSEAQWNTTARVFSHIR) are lumenal. N-linked (GlcNAc...) asparagine glycosylation is found at asparagine 204 and asparagine 218. Residues 229–249 (LGLGHVLIIVQCFISSMANIY) form a helical membrane-spanning segment. Residues 250–263 (NEKILKEGNQLTES) lie on the Cytoplasmic side of the membrane. A helical membrane pass occupies residues 264 to 284 (IFVQNSKLYFFGVLFNGLTLG). Residues 285–303 (LQSGNRDQIKNCGIFYGHN) are Lumenal-facing. A helical transmembrane segment spans residues 304-324 (AFSVALIFVTAFQGLSVAFIL). The Cytoplasmic segment spans residues 325-330 (KFLDNM). A helical membrane pass occupies residues 331-351 (FHVLMAQVTTVVITTVSVLVF). Over 352–354 (DFR) the chain is Lumenal. Residues 355-375 (PSLEFFLEAPSVLLSILIYNA) form a helical membrane-spanning segment. At 376 to 425 (SNPQGVENVPRKERIRDLSGTLWERSSGDGEELERLTKPKSDIESDEDTF) the chain is on the cytoplasmic side. Residues serine 394, serine 416, and serine 420 each carry the phosphoserine modification. The segment at 398-425 (WERSSGDGEELERLTKPKSDIESDEDTF) is disordered. The segment covering 408-418 (LERLTKPKSDI) has biased composition (basic and acidic residues).

Belongs to the nucleotide-sugar transporter family. SLC35A subfamily. In terms of assembly, probably forms homooligomers and heterooligomers with SLC35A1, SLC35A2, SLC35A3 and SLC35A4.

Its subcellular location is the golgi apparatus membrane. The catalysed reaction is UMP(out) + UDP-alpha-D-glucuronate(in) = UMP(in) + UDP-alpha-D-glucuronate(out). It carries out the reaction UMP(out) + UDP-N-acetyl-alpha-D-glucosamine(in) = UMP(in) + UDP-N-acetyl-alpha-D-glucosamine(out). It catalyses the reaction UDP-N-acetyl-alpha-D-galactosamine(in) + UMP(out) = UDP-N-acetyl-alpha-D-galactosamine(out) + UMP(in). Functionally, probable UDP-sugar:UMP transmembrane antiporter involved in UDP-alpha-D-glucuronate/UDP-GlcA, UDP-GlcNAc/UDP-N-acetyl-alpha-D-glucosamine and UDP-N-acetyl-alpha-D-galactosamine/UDP-GalNAc transport from the cytosol to the lumen of the Golgi. In Bos taurus (Bovine), this protein is UDP-sugar transporter protein SLC35A5.